The following is a 227-amino-acid chain: Cytochrome c oxidase subunit 2 (227 aa).

Topologically, residues M1–S14 are mitochondrial intermembrane. The helical transmembrane segment at P15–M45 threads the bilayer. Residues L46–Q59 are Mitochondrial matrix-facing. The chain crosses the membrane as a helical span at residues E60 to M87. At D88–L227 the chain is on the mitochondrial intermembrane side. Positions 161, 196, 198, 200, 204, and 207 each coordinate Cu cation. A Mg(2+)-binding site is contributed by E198.

It belongs to the cytochrome c oxidase subunit 2 family. Component of the cytochrome c oxidase (complex IV, CIV), a multisubunit enzyme composed of 14 subunits. The complex is composed of a catalytic core of 3 subunits MT-CO1, MT-CO2 and MT-CO3, encoded in the mitochondrial DNA, and 11 supernumerary subunits COX4I, COX5A, COX5B, COX6A, COX6B, COX6C, COX7A, COX7B, COX7C, COX8 and NDUFA4, which are encoded in the nuclear genome. The complex exists as a monomer or a dimer and forms supercomplexes (SCs) in the inner mitochondrial membrane with NADH-ubiquinone oxidoreductase (complex I, CI) and ubiquinol-cytochrome c oxidoreductase (cytochrome b-c1 complex, complex III, CIII), resulting in different assemblies (supercomplex SCI(1)III(2)IV(1) and megacomplex MCI(2)III(2)IV(2)). Found in a complex with TMEM177, COA6, COX18, COX20, SCO1 and SCO2. Interacts with TMEM177 in a COX20-dependent manner. Interacts with COX20. Interacts with COX16. Requires Cu cation as cofactor.

Its subcellular location is the mitochondrion inner membrane. The enzyme catalyses 4 Fe(II)-[cytochrome c] + O2 + 8 H(+)(in) = 4 Fe(III)-[cytochrome c] + 2 H2O + 4 H(+)(out). Component of the cytochrome c oxidase, the last enzyme in the mitochondrial electron transport chain which drives oxidative phosphorylation. The respiratory chain contains 3 multisubunit complexes succinate dehydrogenase (complex II, CII), ubiquinol-cytochrome c oxidoreductase (cytochrome b-c1 complex, complex III, CIII) and cytochrome c oxidase (complex IV, CIV), that cooperate to transfer electrons derived from NADH and succinate to molecular oxygen, creating an electrochemical gradient over the inner membrane that drives transmembrane transport and the ATP synthase. Cytochrome c oxidase is the component of the respiratory chain that catalyzes the reduction of oxygen to water. Electrons originating from reduced cytochrome c in the intermembrane space (IMS) are transferred via the dinuclear copper A center (CU(A)) of subunit 2 and heme A of subunit 1 to the active site in subunit 1, a binuclear center (BNC) formed by heme A3 and copper B (CU(B)). The BNC reduces molecular oxygen to 2 water molecules using 4 electrons from cytochrome c in the IMS and 4 protons from the mitochondrial matrix. The polypeptide is Cytochrome c oxidase subunit 2 (MT-CO2) (Cavia aperea (Brazilian guinea pig)).